A 220-amino-acid chain; its full sequence is Ribose-5-phosphate isomerase A (220 aa).

Residues 28-31 (TGST), 81-84 (DGAD), and 94-97 (KGGG) contribute to the substrate site. E103 acts as the Proton acceptor in catalysis. Substrate is bound at residue K121.

The protein belongs to the ribose 5-phosphate isomerase family. Homodimer.

It catalyses the reaction aldehydo-D-ribose 5-phosphate = D-ribulose 5-phosphate. It participates in carbohydrate degradation; pentose phosphate pathway; D-ribose 5-phosphate from D-ribulose 5-phosphate (non-oxidative stage): step 1/1. Catalyzes the reversible conversion of ribose-5-phosphate to ribulose 5-phosphate. In Aromatoleum aromaticum (strain DSM 19018 / LMG 30748 / EbN1) (Azoarcus sp. (strain EbN1)), this protein is Ribose-5-phosphate isomerase A.